Consider the following 544-residue polypeptide: Lysophosphatidylcholine acyltransferase 2 (544 aa).

Residues 1-57 (MSRCAQAAEVAATVPGAGVGNVGLRPPMVPRQASFFPPPVPNPFVQQTQIGSARRVQ) lie on the Cytoplasmic side of the membrane. A helical; Signal-anchor for type II membrane protein transmembrane segment spans residues 58–78 (IVLLGIILLPIRVLLVALILL). Topologically, residues 79–544 (LAWPFAAIST…EESTSDKKDD (466 aa)) are lumenal. The HXXXXD motif signature appears at 146–151 (HSTFFD). Residues 220–223 (EGTC) carry the EGTC motif motif. EF-hand domains follow at residues 391–426 (PVSDVLRQLFALFDRNHDGSIDFREYVIGLAVLCNP) and 428–463 (NTEEIIQVAFKLFDVDEDGYITEEEFSTILQASLGV). Positions 404, 406, 408, 410, 415, 441, 443, 445, 447, and 452 each coordinate Ca(2+). Residues 518–529 (VQTTPSTASNKV) show a composition bias toward polar residues. The disordered stretch occupies residues 518-544 (VQTTPSTASNKVSPEKHEESTSDKKDD). A compositionally biased stretch (basic and acidic residues) spans 530-544 (SPEKHEESTSDKKDD).

This sequence belongs to the 1-acyl-sn-glycerol-3-phosphate acyltransferase family.

It is found in the endoplasmic reticulum membrane. The protein resides in the golgi apparatus membrane. The protein localises to the cell membrane. Its subcellular location is the lipid droplet. It catalyses the reaction a 1-acyl-sn-glycero-3-phosphocholine + an acyl-CoA = a 1,2-diacyl-sn-glycero-3-phosphocholine + CoA. It carries out the reaction a 1-O-alkyl-sn-glycero-3-phosphocholine + acetyl-CoA = a 1-O-alkyl-2-acetyl-sn-glycero-3-phosphocholine + CoA. The catalysed reaction is a 1-acyl-sn-glycero-3-phosphate + an acyl-CoA = a 1,2-diacyl-sn-glycero-3-phosphate + CoA. The enzyme catalyses a 1-O-(1Z-alkenyl)-sn-glycero-3-phosphocholine + an acyl-CoA = a 1-O-(1Z-alkenyl)-2-acyl-sn-glycero-3-phosphocholine + CoA. It catalyses the reaction 1-hexadecanoyl-sn-glycero-3-phosphate + (9Z)-octadecenoyl-CoA = 1-hexadecanoyl-2-(9Z-octadecenoyl)-sn-glycero-3-phosphate + CoA. It carries out the reaction 1-(9Z-octadecenoyl)-sn-glycero-3-phosphate + (9Z)-octadecenoyl-CoA = 1,2-di-(9Z-octadecenoyl)-sn-glycero-3-phosphate + CoA. The catalysed reaction is 1-(9Z-octadecenoyl)-sn-glycero-3-phosphate + hexadecanoyl-CoA = 1-(9Z)-octadecenoyl-2-hexadecanoyl-sn-glycero-3-phosphate + CoA. The enzyme catalyses 1-heptadecanoyl-sn-glycero-3-phosphate + (9Z)-octadecenoyl-CoA = 1-heptadecanoyl-2-(9Z)-octadecenoyl-sn-glycero-3-phosphate + CoA. It catalyses the reaction 1-octadecanoyl-sn-glycero-3-phosphate + (9Z)-octadecenoyl-CoA = 1-octadecanoyl-2-(9Z-octadecenoyl)-sn-glycero-3-phosphate + CoA. It carries out the reaction heptadecanoyl-CoA + 1-(9Z-octadecenoyl)-sn-glycero-3-phosphate = 1-(9Z)-octadecenoyl-2-heptadecanoyl-sn-glycero-3-phosphate + CoA. The catalysed reaction is 1-(9Z-octadecenoyl)-sn-glycero-3-phosphate + (9Z,12Z)-octadecadienoyl-CoA = 1-(9Z)-octadecenoyl-2-(9Z,12Z)-octadecadienoyl-sn-glycero-3-phosphate + CoA. The enzyme catalyses 1-(9Z-octadecenoyl)-sn-glycero-3-phosphate + tetradecanoyl-CoA = 1-(9Z)-octadecenoyl-2-tetradecanoyl-sn-glycero-3-phosphate + CoA. It catalyses the reaction pentadecanoyl-CoA + 1-(9Z-octadecenoyl)-sn-glycero-3-phosphate = 1-(9Z)-octadecenoyl-2-pentadecanoyl-sn-glycero-3-phosphate + CoA. It carries out the reaction nonadecanoyl-CoA + 1-(9Z-octadecenoyl)-sn-glycero-3-phosphate = 1-(9Z)-octadecenoyl-2-nonadecanoyl-sn-glycero-3-phosphate + CoA. The catalysed reaction is 1-hexadecanoyl-sn-glycero-3-phosphocholine + (9Z)-octadecenoyl-CoA = 1-hexadecanoyl-2-(9Z-octadecenoyl)-sn-glycero-3-phosphocholine + CoA. The enzyme catalyses 1-O-hexadecyl-sn-glycero-3-phosphocholine + acetyl-CoA = 1-O-hexadecyl-2-acetyl-sn-glycero-3-phosphocholine + CoA. It catalyses the reaction 1-O-octadecyl-sn-glycero-3-phosphocholine + acetyl-CoA = 1-O-octadecyl-2-acetyl-sn-glycero-3-phosphocholine + CoA. It carries out the reaction 1-hexadecanoyl-sn-glycero-3-phosphocholine + acetyl-CoA = 1-hexadecanoyl-2-acetyl-sn-glycero-3-phosphocholine + CoA. The catalysed reaction is 1-octadecanoyl-sn-glycero-3-phosphocholine + acetyl-CoA = 1-octadecanoyl-2-acetyl-sn-glycero-3-phosphocholine + CoA. The enzyme catalyses a 1-O-(1Z-alkenyl)-sn-glycero-3-phosphocholine + acetyl-CoA = 1-O-(1Z)-alkenyl-2-acetyl-sn-glycero-3-phosphocholine + CoA. It catalyses the reaction 1-O-octadecyl-sn-glycero-3-phosphocholine + (5Z,8Z,11Z,14Z)-eicosatetraenoyl-CoA = 1-O-octadecyl-2-(5Z,8Z,11Z,14Z)-eicosatetraenoyl-sn-glycero-3-phosphocholine + CoA. It participates in lipid metabolism; phospholipid metabolism. In terms of biological role, exhibits both acyltransferase and acetyltransferase activities. Catalyzes the conversion of lysophosphatidylcholine (1-acyl-sn-glycero-3-phosphocholine or LPC) into phosphatidylcholine (1,2-diacyl-sn-glycero-3-phosphocholine or PC). Catalyzes the conversion 1-acyl-sn-glycerol-3-phosphate (lysophosphatidic acid or LPA) into 1,2-diacyl-sn-glycerol-3-phosphate (phosphatidic acid or PA) by incorporating an acyl moiety at the sn-2 position of the glycerol backbone. Involved in platelet-activating factor (PAF) biosynthesis by catalyzing the conversion of the PAF precursor, 1-O-alkyl-sn-glycero-3-phosphocholine (lyso-PAF) into 1-O-alkyl-2-acetyl-sn-glycero-3-phosphocholine (PAF). Also converts lyso-PAF to 1-O-alkyl-2-acyl-sn-glycero-3-phosphocholine (PC), a major component of cell membranes and a PAF precursor. Under resting conditions, acyltransferase activity is preferred. Upon acute inflammatory stimulus, acetyltransferase activity is enhanced and PAF synthesis increases. Involved in the regulation of lipid droplet number and size. The protein is Lysophosphatidylcholine acyltransferase 2 (LPCAT2) of Homo sapiens (Human).